The following is a 485-amino-acid chain: ATP synthase subunit beta (485 aa).

The segment at 1-20 (MSTTKTTKMTVKTGSKGTSG) is disordered. 170-177 (GGAGVGKT) lines the ATP pocket.

Belongs to the ATPase alpha/beta chains family. As to quaternary structure, F-type ATPases have 2 components, CF(1) - the catalytic core - and CF(0) - the membrane proton channel. CF(1) has five subunits: alpha(3), beta(3), gamma(1), delta(1), epsilon(1). CF(0) has three main subunits: a(1), b(2) and c(9-12). The alpha and beta chains form an alternating ring which encloses part of the gamma chain. CF(1) is attached to CF(0) by a central stalk formed by the gamma and epsilon chains, while a peripheral stalk is formed by the delta and b chains.

It localises to the cell membrane. The catalysed reaction is ATP + H2O + 4 H(+)(in) = ADP + phosphate + 5 H(+)(out). Functionally, produces ATP from ADP in the presence of a proton gradient across the membrane. The catalytic sites are hosted primarily by the beta subunits. The sequence is that of ATP synthase subunit beta from Mycobacterium leprae (strain TN).